We begin with the raw amino-acid sequence, 391 residues long: Ferrochelatase (391 aa).

The Fe cation site is built by H196 and E281.

The protein belongs to the ferrochelatase family.

The protein localises to the cytoplasm. It carries out the reaction heme b + 2 H(+) = protoporphyrin IX + Fe(2+). It participates in porphyrin-containing compound metabolism; protoheme biosynthesis; protoheme from protoporphyrin-IX: step 1/1. In terms of biological role, catalyzes the ferrous insertion into protoporphyrin IX. The polypeptide is Ferrochelatase (Prochlorococcus marinus (strain NATL1A)).